Reading from the N-terminus, the 524-residue chain is MIHKSDSDTTVRRFDLSQQFTAMQRISVVLSRATEASKTLQEVLSVLHNDAFMQHGMICLYDSQQEILSIEALQQTENQTLPGSTQIRYRPGEGLVGTVLAQGQSLVLPRVADDQRFLDRLSLYDYDLPFIAVPLMGPHSRPIGVLAAQPMARQEERLPACTRFLETVANLIAQTIRLMILPTSAAQPPQQSPRVERPRACTSSRGFGLENMVGKSPAMRQIMDIIRQVSRWDTTVLVRGESGTGKELIANAIHHNSPRAAAAFVKFNCAALPDNLLESELFGHEKGAFTGAVRQRKGRFELADGGTLFLDEIGESSASFQAKLLRILQEGEMERVGGDETLRVNVRIIAATNRHLEEEVRLGHFREDLYYRLNVMPIALPPLRERQEDIAELAHFLVRKIAHSQGRTLRISDGAIRLLMEYSWPGNVRELENCLERSAVLSESGLIDRDVILFNHRDNPPKALASSGPAEDGWLDNSLDERQRLIAALEKAGWVQAKAARLLGMTPRQVAYRIQIMDITMPRL.

The tract at residues 1–182 (MIHKSDSDTT…AQTIRLMILP (182 aa)) is a domain. The region spanning 35–176 (EASKTLQEVL…TVANLIAQTI (142 aa)) is the GAF domain. Positions 212-481 (MVGKSPAMRQ…DGWLDNSLDE (270 aa)) constitute a Sigma-54 factor interaction domain. Residues 240-247 (GESGTGKE) and 303-312 (ADGGTLFLDE) contribute to the ATP site. The tract at residues 482-524 (RQRLIAALEKAGWVQAKAARLLGMTPRQVAYRIQIMDITMPRL) is C-terminal DNA-binding domain. The segment at residues 496-515 (QAKAARLLGMTPRQVAYRIQ) is a DNA-binding region (H-T-H motif).

In terms of assembly, interacts with sigma-54.

Required for activation of most nif operons, which are directly involved in nitrogen fixation. In Klebsiella oxytoca, this protein is Nif-specific regulatory protein (nifA).